The following is a 77-amino-acid chain: U8-lycotoxin-Ls1m (77 aa).

The signal sequence occupies residues 1–20 (MKLMIFTGLVLFAIVRLIEA). Positions 21–26 (QAENEK) are excised as a propeptide.

It belongs to the neurotoxin 19 (CSTX) family. 08 (U8-Lctx) subfamily. In terms of processing, contains 4 disulfide bonds. Expressed by the venom gland.

Its subcellular location is the secreted. The polypeptide is U8-lycotoxin-Ls1m (Lycosa singoriensis (Wolf spider)).